The primary structure comprises 366 residues: MNHLMFYCRPGFEKDMAAEIQDKAVALECFGFSRVADNCGFVLFECYGEQDAERLARRLPFRELIFARQMLVVIEQLNGLDLKDRITPIVEAVQKMPQFGELRVETADTNEAKELSTFCRKFSVPLRQALRAAGKLTPDVDPRRPVLHLFFLKNDSVWIGYSYPNNNSPFHMGIPRLRFPSDAPSRSTLKLEEAFYMFIPPEDDEIRLCSGLTAVDLGASPGGWTYQLVRRGMMVSAIDNGPMAESLMESGQVKHIMADGFTYRPTKKNPYWLVCDMVEKPARITHLIAQWFREGCCQEAIFNLKLPMKKRYAEVEHNLAVLKEWLAEIDGEYVIQAKQLYHDREEITVHVYDERKLARRRSGAFN.

Residues Ser-187, 220–223, Asp-239, Asp-259, and Asp-276 contribute to the S-adenosyl-L-methionine site; that span reads SPGG. Lys-305 (proton acceptor) is an active-site residue.

Belongs to the class I-like SAM-binding methyltransferase superfamily. RNA methyltransferase RlmE family. RlmM subfamily. As to quaternary structure, monomer.

The protein localises to the cytoplasm. It catalyses the reaction cytidine(2498) in 23S rRNA + S-adenosyl-L-methionine = 2'-O-methylcytidine(2498) in 23S rRNA + S-adenosyl-L-homocysteine + H(+). Catalyzes the 2'-O-methylation at nucleotide C2498 in 23S rRNA. This Tolumonas auensis (strain DSM 9187 / NBRC 110442 / TA 4) protein is Ribosomal RNA large subunit methyltransferase M.